A 99-amino-acid chain; its full sequence is Putative pterin-4-alpha-carbinolamine dehydratase (99 aa).

Belongs to the pterin-4-alpha-carbinolamine dehydratase family.

It carries out the reaction (4aS,6R)-4a-hydroxy-L-erythro-5,6,7,8-tetrahydrobiopterin = (6R)-L-erythro-6,7-dihydrobiopterin + H2O. This chain is Putative pterin-4-alpha-carbinolamine dehydratase, found in Aquifex aeolicus (strain VF5).